The following is a 220-amino-acid chain: Large ribosomal subunit protein uL3 (220 aa).

The tract at residues 145–169 (GPASHGSKFHRRPGSSGNRTWPGRV) is disordered.

It belongs to the universal ribosomal protein uL3 family. In terms of assembly, part of the 50S ribosomal subunit. Forms a cluster with proteins L14 and L19.

One of the primary rRNA binding proteins, it binds directly near the 3'-end of the 23S rRNA, where it nucleates assembly of the 50S subunit. This is Large ribosomal subunit protein uL3 from Bdellovibrio bacteriovorus (strain ATCC 15356 / DSM 50701 / NCIMB 9529 / HD100).